We begin with the raw amino-acid sequence, 73 residues long: Cell division protein ZapB (73 aa).

Positions 3–66 (LELLSQLETK…SWSDKVNGLV (64 aa)) form a coiled coil.

The protein belongs to the ZapB family. In terms of assembly, homodimer. The ends of the coiled-coil dimer bind to each other, forming polymers. Interacts with FtsZ.

It is found in the cytoplasm. Its function is as follows. Non-essential, abundant cell division factor that is required for proper Z-ring formation. It is recruited early to the divisome by direct interaction with FtsZ, stimulating Z-ring assembly and thereby promoting cell division earlier in the cell cycle. Its recruitment to the Z-ring requires functional FtsA or ZipA. This chain is Cell division protein ZapB, found in Shewanella frigidimarina (strain NCIMB 400).